We begin with the raw amino-acid sequence, 612 residues long: Bifunctional 6(G)-fructosyltransferase/2,1-fructan:2,1-fructan 1-fructosyltransferase (612 aa).

The Cytoplasmic portion of the chain corresponds to 1–24 (MDAQDIESRHPLIGARPRRRALRS). A helical; Signal-anchor for type II membrane protein transmembrane segment spans residues 25–45 (LSILLAAALLLGLVLFYANGT). The Vacuolar segment spans residues 46-612 (GSGTAVDPVR…NSTYNDFYHF (567 aa)). Residues 82 to 85 (YMND), glutamine 101, and tryptophan 109 each bind substrate. Aspartate 85 is a catalytic residue. The N-linked (GlcNAc...) asparagine glycan is linked to asparagine 111. Substrate-binding positions include 144-145 (WT) and 208-209 (RD). 2 N-linked (GlcNAc...) asparagine glycosylation sites follow: asparagine 216 and asparagine 230. Glutamate 267 contributes to the substrate binding site. The N-linked (GlcNAc...) asparagine glycan is linked to asparagine 465. A disulfide bond links cysteine 466 and cysteine 514. 2 N-linked (GlcNAc...) asparagine glycosylation sites follow: asparagine 586 and asparagine 603.

It belongs to the glycosyl hydrolase 32 family. In terms of processing, might be processed in two N-terminal and C-terminal proteolytic fragments.

The protein resides in the vacuole membrane. The catalysed reaction is [1-beta-D-fructofuranosyl-(2-&gt;1)-]m+1 alpha-D-glucopyranoside + [1-beta-D-fructofuranosyl-(2-&gt;1)-]n+1 alpha-D-glucopyranoside = [1-beta-D-fructofuranosyl-(2-&gt;1)-]m alpha-D-glucopyranoside + [1-beta-D-fructofuranosyl-(2-&gt;1)-]n+1 beta-D-fructofuranosyl-(2-&gt;6)-alpha-D-glucopyranoside (m &gt; 0, n &gt;= 0).. It carries out the reaction [beta-D-fructosyl-(2-&gt;1)-]m + [beta-D-fructosyl-(2-&gt;1)-]n = [beta-D-fructosyl-(2-&gt;1)-]m-1 + [beta-D-fructosyl-(2-&gt;1)-]n+1.. Involved in the synthesis of fructan of the inulin neoseries. Catalyzes a self-transfer between identical oligosaccharides of the 1-kestose series. The polypeptide is Bifunctional 6(G)-fructosyltransferase/2,1-fructan:2,1-fructan 1-fructosyltransferase (Allium cepa (Onion)).